The sequence spans 299 residues: GTPase Era (299 aa).

An Era-type G domain is found at 4-171; that stretch reads KSGFVAILGR…IKLLTDNLEE (168 aa). The segment at 12–19 is G1; sequence GRPNVGKS. Residue 12 to 19 participates in GTP binding; it reads GRPNVGKS. Residues 38 to 42 are G2; that stretch reads QTTRN. The G3 stretch occupies residues 59-62; that stretch reads DTPG. GTP is bound by residues 59-63 and 121-124; these read DTPGI and NKID. The G4 stretch occupies residues 121 to 124; it reads NKID. The G5 stretch occupies residues 150–152; it reads ISA. The KH type-2 domain occupies 202–280; that stretch reads TQQEVPHSVA…YLETWVKVKK (79 aa).

Belongs to the TRAFAC class TrmE-Era-EngA-EngB-Septin-like GTPase superfamily. Era GTPase family. As to quaternary structure, monomer.

It is found in the cytoplasm. The protein localises to the cell membrane. Its function is as follows. An essential GTPase that binds both GDP and GTP, with rapid nucleotide exchange. Plays a role in 16S rRNA processing and 30S ribosomal subunit biogenesis and possibly also in cell cycle regulation and energy metabolism. This chain is GTPase Era, found in Streptococcus agalactiae serotype III (strain NEM316).